The following is a 270-amino-acid chain: SAGA-associated factor 29 homolog A (270 aa).

N-acetylserine is present on S2. Residues 85-113 are disordered; the sequence is LPSGPTGQQRRKLEGNEQKRKRMKVDTDV. Residues 95-113 show a composition bias toward basic and acidic residues; the sequence is RKLEGNEQKRKRMKVDTDV. The SGF29 C-terminal domain occupies 125–270; it reads EAYASLKGEQ…VVALPEGHRQ (146 aa). 2 histone H3K4me3 N-terminus binding regions span residues 168 to 170 and 217 to 220; these read DEE and GTTA. The segment at 242–245 is histone H3K4me3 binding; sequence FDDD.

The protein belongs to the SGF29 family. Expressed in roots, rosette leaves, cauline leaves, stems and flowers.

It localises to the nucleus. Chromatin reader component of the transcription regulatory histone acetylation (HAT) complex SAGA. Involved in salt stress tolerance. Enhances the effect of ADA2B in the positive regulation of salt-induced gene expression. The chain is SAGA-associated factor 29 homolog A from Arabidopsis thaliana (Mouse-ear cress).